Consider the following 363-residue polypeptide: MQAFLKGTSISTKPPLTKDRGVAASAGSSGENKKAKPVPWVEKYRPKCVDEVAFQEEVVAVLKKSLEGADLPNLLFYGPPGTGKTSTILAAARELFGPELFRLRVLELNASDERGIQVVREKVKNFAQLTVSGSRSDGKPCPPFKIVILDEADSMTSAAQAALRRTMEKESKTTRFCLICNYVSRIIEPLTSRCSKFRFKPLSDKIQQQRLLDIAKKENVKISDEGIAYLVKVSEGDLRKAITFLQSATRLTGGKEITEKVITDIAGVIPAEKIDGVFAACQSGSFDKLEAVVKDLIDEGHAATQLVNQLHDVVVENNLSDKQKSIITEKLAEVDKCLADGADEHLQLISLCATVMQQLSQNC.

At methionine 1 the chain carries N-acetylmethionine. The interval 1 to 36 is disordered; that stretch reads MQAFLKGTSISTKPPLTKDRGVAASAGSSGENKKAK. N6-acetyllysine is present on residues lysine 6 and lysine 13. 78 to 85 is an ATP binding site; it reads GPPGTGKT.

It belongs to the activator 1 small subunits family. As to quaternary structure, subunit of the RFC complex, an heteropentameric complex consisting of a large subunit RFC1 and four small subunits RFC2, RFC3, RFC4 and RFC5; the RFC complex interacts with PCNA. Forms an heterotetrameric complex with RFC2, RFC3 and RFC5; this complex has ATPase activity but is not stimulated by PCNA. The heterotetramer of subunits RFC2, RFC3, RFC4 and RFC5 interacts with RAD17. Interacts with ATAD5. Interacts with CTF18. Interacts with CNTD1; this interaction facilitates crossover formation.

Its subcellular location is the nucleus. Subunit of the replication factor C (RFC) complex which acts during elongation of primed DNA templates by DNA polymerases delta and epsilon, and is necessary for ATP-dependent loading of proliferating cell nuclear antigen (PCNA) onto primed DNA. The RFC4 subunit probably functions as a scaffold on which the other complex components can assemble. The polypeptide is Replication factor C subunit 4 (RFC4) (Homo sapiens (Human)).